The following is a 297-amino-acid chain: Phosphoribosylaminoimidazole-succinocarboxamide synthase (297 aa).

It belongs to the SAICAR synthetase family.

The catalysed reaction is 5-amino-1-(5-phospho-D-ribosyl)imidazole-4-carboxylate + L-aspartate + ATP = (2S)-2-[5-amino-1-(5-phospho-beta-D-ribosyl)imidazole-4-carboxamido]succinate + ADP + phosphate + 2 H(+). The protein operates within purine metabolism; IMP biosynthesis via de novo pathway; 5-amino-1-(5-phospho-D-ribosyl)imidazole-4-carboxamide from 5-amino-1-(5-phospho-D-ribosyl)imidazole-4-carboxylate: step 1/2. This Corynebacterium glutamicum (strain R) protein is Phosphoribosylaminoimidazole-succinocarboxamide synthase.